A 79-amino-acid polypeptide reads, in one-letter code: Protein FAM236C (79 aa).

Residues 19-48 are disordered; it reads KGPQKDPEELVAVSDTAEDPSSGTGLPREP.

This sequence belongs to the FAM236 family.

The sequence is that of Protein FAM236C from Homo sapiens (Human).